The following is a 376-amino-acid chain: Proteasome-interacting protein CIC1 (376 aa).

2 disordered regions span residues 1 to 29 (MAKKSNSKKSTPVSTPSKEKKKVIEKKSS) and 356 to 376 (RSSSELEKESSESEAVKKAKS). Positions 310–376 (ETHEDDMVTI…ESEAVKKAKS (67 aa)) are required for interaction with CDC4. Residues 357 to 376 (SSSELEKESSESEAVKKAKS) are compositionally biased toward basic and acidic residues.

Interacts with CDC4, PRE4, PRE6, RPT1 and SCL1 as part of the fully assembled 26S proteasome. Interacts with pre-ribosomal particles constituent NOP7.

The protein localises to the nucleus. Its subcellular location is the nucleolus. Its function is as follows. An adapter protein that specifically links the 26S proteasome to its substrate CDC4 which is one of the substrate recognition subunits of the SCF E3 ubiquitin ligase complex. Required for turnover of cell cycle regulatory proteins CDC4 and GRR1. Required for synthesis and nuclear export of 60S ribosomal subunits. Required for vegetative growth. This is Proteasome-interacting protein CIC1 (CIC1) from Saccharomyces cerevisiae (strain ATCC 204508 / S288c) (Baker's yeast).